The sequence spans 546 residues: Chaperonin GroEL (546 aa).

Residues Thr30 to Pro33, Lys51, Asp87 to Thr91, Gly415, and Asp495 contribute to the ATP site.

This sequence belongs to the chaperonin (HSP60) family. As to quaternary structure, forms a cylinder of 14 subunits composed of two heptameric rings stacked back-to-back. Interacts with the co-chaperonin GroES.

It localises to the cytoplasm. The enzyme catalyses ATP + H2O + a folded polypeptide = ADP + phosphate + an unfolded polypeptide.. Its function is as follows. Together with its co-chaperonin GroES, plays an essential role in assisting protein folding. The GroEL-GroES system forms a nano-cage that allows encapsulation of the non-native substrate proteins and provides a physical environment optimized to promote and accelerate protein folding. The polypeptide is Chaperonin GroEL (Brucella suis (strain ATCC 23445 / NCTC 10510)).